We begin with the raw amino-acid sequence, 281 residues long: Nucleotide-binding protein DNO_0399 (281 aa).

6–13 (GMSGAGKS) provides a ligand contact to ATP. 55-58 (DARN) is a binding site for GTP.

The protein belongs to the RapZ-like family.

In terms of biological role, displays ATPase and GTPase activities. In Dichelobacter nodosus (strain VCS1703A), this protein is Nucleotide-binding protein DNO_0399.